Here is a 184-residue protein sequence, read N- to C-terminus: Tumor necrosis factor alpha-induced protein 8-like protein 2 (184 aa).

Position 3 is a phosphoserine (S3).

This sequence belongs to the TNFAIP8 family. TNFAIP8L2 subfamily. As to quaternary structure, may interact with CASP8; however, such result is unclear since could not reproduce the interaction with CASP8. Interacts with RAC1. Post-translationally, phosphorylated by TAK1/MAP3K7; this phosphorylation triggers association with BTRC and subsequent ubiquitination and degradation. Ubiquitinated in a BTRC-depdent manner; leading to degradation mediated through the proteasome pathway. In terms of tissue distribution, expressed in thymus, spleen, lymph node and small intestine, but not in liver, heart, muscle, testis, spinal cord or brain. Up-regulated in the spinal cord of mice with experimental autoimmune encephalomyelitis. Constitutively expressed by macrophages, B and T-lymphocytes at various developmental stages.

It is found in the cytoplasm. Its subcellular location is the nucleus. The protein resides in the lysosome. Functionally, acts as a negative regulator of innate and adaptive immunity by maintaining immune homeostasis. Plays a regulatory role in the Toll-like signaling pathway by determining the strength of LPS-induced signaling and gene expression. Inhibits TCR-mediated T-cell activation and negatively regulate T-cell function to prevent hyperresponsiveness. Also inhibits autolysosome formation via negatively modulating MTOR activation by interacting with RAC1 and promoting the disassociation of the RAC1-MTOR complex. Plays an essential role in NK-cell biology by acting as a checkpoint and displaying an expression pattern correlating with NK-cell maturation process and by negatively regulating NK-cell maturation and antitumor immunity. Mechanistically, suppresses IL-15-triggered mTOR activity in NK-cells. This chain is Tumor necrosis factor alpha-induced protein 8-like protein 2 (Tnfaip8l2), found in Mus musculus (Mouse).